The primary structure comprises 827 residues: Probable inorganic carbon transporter subunit DabA2 (827 aa).

Zn(2+) contacts are provided by Cys-351, Asp-353, His-524, and Cys-539.

This sequence belongs to the inorganic carbon transporter (TC 9.A.2) DabA family. In terms of assembly, forms a complex with DabB2, possibly a heterodimer. Zn(2+) serves as cofactor.

Its subcellular location is the cell inner membrane. Uptake of inorganic carbon by cells in the presence of thiosulphate is fully inhibited by the uncouplers carbonyl cyanide m-chlorophenyl hydrazone (CCCP), carbonyl cyanide p-trifluoromethoxyphenyl hydrazone (FCCP), S13 or SF6847. Not inhibited by the ATPase inhibitor N,N-dicyclohexylcarbodiimide (DCCD). Inorganic carbon uptake is inhibited by the ionophore CCCP, suggesting uptake is coupled to a cation gradient. Part of an energy-coupled inorganic carbon pump; its substrate may be carbon dioxide. Expression of both dabA2 and dabB2 (DAB2) restores growth in ambient air to E.coli deleted of its carbonic anhydrase genes (called CAfree, deletion of 'can' and 'cynT'); neither dabA2 or dabB2 alone is sufficient. Rescue is pH-independent, suggesting it transports CO(2) and not carbonate ions. Together the genes allow greater than normal uptake of inorganic carbon by E.coli. Uptake of carbon dioxide rather than bicarbonate has been suggested based on kinetic calculations. This Halothiobacillus neapolitanus (strain ATCC 23641 / c2) (Thiobacillus neapolitanus) protein is Probable inorganic carbon transporter subunit DabA2.